Reading from the N-terminus, the 136-residue chain is Heme-binding protein Rv0203 (136 aa).

The signal sequence occupies residues 1-27; that stretch reads MKTGTATTRRRLLAVLIALALPGAAVA. Cysteine 41 and cysteine 115 are oxidised to a cystine. Heme contacts are provided by tyrosine 60, histidine 64, and histidine 90.

Dimer of dimers.

It is found in the secreted. Part of a heme-iron acquisition system. Acts by binding heme and delivering it to the membrane proteins MmpL3 and MmpL11. Can use free heme or heme from host hemoglobin. This Mycobacterium tuberculosis (strain ATCC 25618 / H37Rv) protein is Heme-binding protein Rv0203.